A 235-amino-acid chain; its full sequence is Large ribosomal subunit protein uL1 (235 aa).

It belongs to the universal ribosomal protein uL1 family. In terms of assembly, part of the 50S ribosomal subunit.

In terms of biological role, binds directly to 23S rRNA. The L1 stalk is quite mobile in the ribosome, and is involved in E site tRNA release. Its function is as follows. Protein L1 is also a translational repressor protein, it controls the translation of the L11 operon by binding to its mRNA. The sequence is that of Large ribosomal subunit protein uL1 from Prochlorococcus marinus (strain MIT 9312).